The chain runs to 170 residues: Small ribosomal subunit protein uS5 (170 aa).

Residues 12–75 (WSELLVSVRR…NAAKKSMIRV (64 aa)) form the S5 DRBM domain.

This sequence belongs to the universal ribosomal protein uS5 family. Part of the 30S ribosomal subunit. Contacts proteins S4 and S8.

Functionally, with S4 and S12 plays an important role in translational accuracy. In terms of biological role, located at the back of the 30S subunit body where it stabilizes the conformation of the head with respect to the body. The chain is Small ribosomal subunit protein uS5 from Wolbachia sp. subsp. Brugia malayi (strain TRS).